Consider the following 498-residue polypeptide: Sulfate adenylyltransferase subunit 1 (498 aa).

The tr-type G domain maps to 30-246 (TRPLRLITCG…LELATTRSAQ (217 aa)). The segment at 39–46 (GSVDDGKS) is G1. Residue 39-46 (GSVDDGKS) coordinates GTP. Residues 97–101 (GITID) form a G2 region. Residues 118–121 (DTPG) form a G3 region. GTP contacts are provided by residues 118–122 (DTPGH) and 173–176 (NKID). A G4 region spans residues 173–176 (NKID). The segment at 210 to 212 (SAL) is G5.

This sequence belongs to the TRAFAC class translation factor GTPase superfamily. Classic translation factor GTPase family. CysN/NodQ subfamily. Heterodimer composed of CysD, the smaller subunit, and CysN.

The enzyme catalyses sulfate + ATP + H(+) = adenosine 5'-phosphosulfate + diphosphate. It functions in the pathway sulfur metabolism; hydrogen sulfide biosynthesis; sulfite from sulfate: step 1/3. Its function is as follows. With CysD forms the ATP sulfurylase (ATPS) that catalyzes the adenylation of sulfate producing adenosine 5'-phosphosulfate (APS) and diphosphate, the first enzymatic step in sulfur assimilation pathway. APS synthesis involves the formation of a high-energy phosphoric-sulfuric acid anhydride bond driven by GTP hydrolysis by CysN coupled to ATP hydrolysis by CysD. The polypeptide is Sulfate adenylyltransferase subunit 1 (Rhizobium meliloti (strain 1021) (Ensifer meliloti)).